A 363-amino-acid polypeptide reads, in one-letter code: Probable mannitol dehydrogenase 3 (363 aa).

Residues Cys-51, His-73, Cys-104, Cys-107, Cys-110, Cys-118, and Cys-168 each coordinate Zn(2+).

It belongs to the zinc-containing alcohol dehydrogenase family. Requires Zn(2+) as cofactor.

The enzyme catalyses D-mannitol + NAD(+) = D-mannose + NADH + H(+). Oxidizes mannitol to mannose. Provides the initial step by which translocated mannitol is committed to central metabolism and, by regulating mannitol pool size, is important in regulating salt tolerance at the cellular level. This Stylosanthes humilis (Townsville stylo) protein is Probable mannitol dehydrogenase 3 (CAD3).